A 223-amino-acid polypeptide reads, in one-letter code: Endonuclease NucS (223 aa).

It belongs to the NucS endonuclease family.

The protein localises to the cytoplasm. Cleaves both 3' and 5' ssDNA extremities of branched DNA structures. The sequence is that of Endonuclease NucS from Mycobacterium sp. (strain JLS).